We begin with the raw amino-acid sequence, 629 residues long: tRNA uridine 5-carboxymethylaminomethyl modification enzyme MnmG (629 aa).

FAD is bound at residue 13–18 (GGGHAG). 273–287 (GPRYCPSIEDKIVRF) provides a ligand contact to NAD(+).

Belongs to the MnmG family. As to quaternary structure, homodimer. Heterotetramer of two MnmE and two MnmG subunits. FAD is required as a cofactor.

It localises to the cytoplasm. NAD-binding protein involved in the addition of a carboxymethylaminomethyl (cmnm) group at the wobble position (U34) of certain tRNAs, forming tRNA-cmnm(5)s(2)U34. The chain is tRNA uridine 5-carboxymethylaminomethyl modification enzyme MnmG from Marinomonas sp. (strain MWYL1).